The primary structure comprises 748 residues: Antigen peptide transporter 1 (748 aa).

The Cytoplasmic portion of the chain corresponds to 1 to 15 (MASSRCPAPRGCRCL). Residues 16–36 (PGASLAWLGTVLLFLADWVLL) traverse the membrane as a helical segment. Over 37 to 53 (RTALPRIFSLLVPTALP) the chain is Lumenal. A helical transmembrane segment spans residues 54–76 (LLRVWAVGLSRWAVLWLGACGVL). At 77-92 (RATVGSKSENAGAQGW) the chain is on the cytoplasmic side. A helical transmembrane segment spans residues 93-113 (LAALEPLAAALGLALPGLALF). Residues 114–133 (RELISWGAPGSADSTRLLHW) are Lumenal-facing. Residues 134 to 154 (GSHPSAFVVSYAAALPAAALW) form a helical membrane-spanning segment. The Cytoplasmic portion of the chain corresponds to 155–186 (HKLGSLWVPGGQGGSGNPVRRLLGCLGSETRR). A helical membrane pass occupies residues 187-207 (LSLFLVLVVLSSLGEMAIPFF). One can recognise an ABC transmembrane type-1 domain in the interval 187–470 (LSLFLVLVVL…LLSIYPRVQK (284 aa)). Over 208–227 (TGRLTDWILQDGSADTFTRN) the chain is Lumenal. The chain crosses the membrane as a helical span at residues 228-248 (LTLMSILTIASAVLEFVGDGI). The Cytoplasmic segment spans residues 249–298 (YNNTMGHVHSHLQGEVFGAVLRQETEFFQQNQTGNITSRVTEDTSTLSDS). The helical transmembrane segment at 299–319 (LSENLSLFLWYLVRGLCLLGI) threads the bilayer. Residues 320–328 (MLWGSVSLT) are Lumenal-facing. Residues 329 to 349 (MVTLVTLPLLFLLPKKVGKWY) form a helical membrane-spanning segment. The Cytoplasmic portion of the chain corresponds to 350–418 (QLLEVQVRES…AVNSWTTSIS (69 aa)). Positions 375 to 420 (PTVRSFANEEGEAQKFREKLQEIKTLNQKEAVAYAVNSWTTSISGM) are part of the peptide-binding site. A helical transmembrane segment spans residues 419-439 (GMLLKVGILYIGGQLVTSGAV). Residues 440 to 443 (SSGN) lie on the Lumenal side of the membrane. A helical membrane pass occupies residues 444–464 (LVTFVLYQMQFTQAVEVLLSI). Residues 453 to 487 (QFTQAVEVLLSIYPRVQKAVGSSEKIFEYLDRTPR) are part of the peptide-binding site. The Cytoplasmic portion of the chain corresponds to 465–748 (YPRVQKAVGS…MVQAPADAPE (284 aa)). Residues 503–742 (VQFQDVSFAY…KGCYWAMVQA (240 aa)) enclose the ABC transporter domain. Residues 538–546 (GPNGSGKST), 641–647 (SQLSGGQ), and Gln701 each bind ATP. Ser545 provides a ligand contact to Mg(2+).

It belongs to the ABC transporter superfamily. ABCB family. MHC peptide exporter (TC 3.A.1.209) subfamily. In terms of assembly, heterodimer of TAP1 and TAP2 (TAP1-TAP2). A component of the peptide loading complex (PLC), interacts via TAPBP with MHCI heterodimer; this interaction mediates peptide-MHCI assembly. Interacts with PSMB5 and PSMB8. Requires Mg(2+) as cofactor.

It localises to the endoplasmic reticulum membrane. It carries out the reaction a peptide antigen(in) + ATP + H2O = a peptide antigen(out) + ADP + phosphate + H(+). ABC transporter associated with antigen processing. In complex with TAP2 mediates unidirectional translocation of peptide antigens from cytosol to endoplasmic reticulum (ER) for loading onto MHC class I (MHCI) molecules. Uses the chemical energy of ATP to export peptides against the concentration gradient. During the transport cycle alternates between 'inward-facing' state with peptide binding site facing the cytosol to 'outward-facing' state with peptide binding site facing the ER lumen. Peptide antigen binding to ATP-loaded TAP1-TAP2 induces a switch to hydrolysis-competent 'outward-facing' conformation ready for peptide loading onto nascent MHCI molecules. Subsequently ATP hydrolysis resets the transporter to the 'inward facing' state for a new cycle. As a component of the peptide loading complex (PLC), acts as a molecular scaffold essential for peptide-MHCI assembly and antigen presentation. The polypeptide is Antigen peptide transporter 1 (TAP1) (Gorilla gorilla gorilla (Western lowland gorilla)).